Reading from the N-terminus, the 421-residue chain is Na(+)/H(+) antiporter NhaA 1 (421 aa).

Transmembrane regions (helical) follow at residues 48–68 (SSGL…NSPW), 93–113 (LYWW…GLEI), 129–149 (SLAL…YTLV), 157–177 (AGWG…LALL), 187–207 (VLLA…IALF), 215–235 (LALG…AAGV), 253–273 (LASG…IPLG), 299–319 (FLIL…GGSL), 326–346 (VVLG…WLAV), 364–384 (GLGL…GLAF), and 392–412 (AAKL…ITVL).

The protein belongs to the NhaA Na(+)/H(+) (TC 2.A.33) antiporter family.

The protein resides in the cell membrane. The enzyme catalyses Na(+)(in) + 2 H(+)(out) = Na(+)(out) + 2 H(+)(in). Its function is as follows. Na(+)/H(+) antiporter that extrudes sodium in exchange for external protons. The chain is Na(+)/H(+) antiporter NhaA 1 from Deinococcus geothermalis (strain DSM 11300 / CIP 105573 / AG-3a).